Here is a 157-residue protein sequence, read N- to C-terminus: MAKKNHQGLDANLIAQNKKARHDYTVTDTFEAGLVLTGTEIKSVRARRVTLKDGYAQFHNGELWLMNVHIAEFAGGNIFNHDPLRNRKLLLHKKELKKLQGELTAKGVTLVPLKMYLKHGYAKVLLGLAQGKHEYDKRNAIKKREQDRQIDRVMKHY.

This sequence belongs to the SmpB family.

It is found in the cytoplasm. Functionally, required for rescue of stalled ribosomes mediated by trans-translation. Binds to transfer-messenger RNA (tmRNA), required for stable association of tmRNA with ribosomes. tmRNA and SmpB together mimic tRNA shape, replacing the anticodon stem-loop with SmpB. tmRNA is encoded by the ssrA gene; the 2 termini fold to resemble tRNA(Ala) and it encodes a 'tag peptide', a short internal open reading frame. During trans-translation Ala-aminoacylated tmRNA acts like a tRNA, entering the A-site of stalled ribosomes, displacing the stalled mRNA. The ribosome then switches to translate the ORF on the tmRNA; the nascent peptide is terminated with the 'tag peptide' encoded by the tmRNA and targeted for degradation. The ribosome is freed to recommence translation, which seems to be the essential function of trans-translation. This chain is SsrA-binding protein, found in Limosilactobacillus fermentum (strain NBRC 3956 / LMG 18251) (Lactobacillus fermentum).